Here is a 160-residue protein sequence, read N- to C-terminus: Probable small nuclear ribonucleoprotein-associated protein B (160 aa).

A Sm domain is found at 4–86 (SKNNKMMAHL…IVSMTVDGPP (83 aa)). The disordered stretch occupies residues 80-160 (MTVDGPPPRD…YGGPPGGRPF (81 aa)). 3 stretches are compositionally biased toward gly residues: residues 99–113 (GGAGGVGQAKPGGRG), 128–143 (APGGLSGAMRGHGGPG), and 150–160 (GYGGPPGGRPF).

This sequence belongs to the snRNP SmB/SmN family.

Its subcellular location is the nucleus. It is found in the cytoplasm. The protein localises to the cytosol. Plays a role in pre-mRNA splicing as a core component of the spliceosomal U1, U2, U4 and U5 small nuclear ribonucleoproteins (snRNPs), the building blocks of the spliceosome. In Caenorhabditis elegans, this protein is Probable small nuclear ribonucleoprotein-associated protein B (snr-2).